The chain runs to 294 residues: Shikimate dehydrogenase (NADP(+)) (294 aa).

Shikimate-binding positions include Ser-22–Ser-24 and Ser-69. The active-site Proton acceptor is Lys-73. Shikimate contacts are provided by Asn-94 and Asp-111. NADP(+)-binding positions include Gly-135–Ala-139 and Leu-236. Tyr-238 is a binding site for shikimate. Gly-260 is an NADP(+) binding site.

This sequence belongs to the shikimate dehydrogenase family. As to quaternary structure, homodimer.

The catalysed reaction is shikimate + NADP(+) = 3-dehydroshikimate + NADPH + H(+). The protein operates within metabolic intermediate biosynthesis; chorismate biosynthesis; chorismate from D-erythrose 4-phosphate and phosphoenolpyruvate: step 4/7. In terms of biological role, involved in the biosynthesis of the chorismate, which leads to the biosynthesis of aromatic amino acids. Catalyzes the reversible NADPH linked reduction of 3-dehydroshikimate (DHSA) to yield shikimate (SA). This chain is Shikimate dehydrogenase (NADP(+)), found in Streptococcus equi subsp. zooepidemicus (strain MGCS10565).